The primary structure comprises 253 residues: ABC transporter D-alanine-binding periplasmic protein (253 aa).

The first 22 residues, methionine 1–alanine 22, serve as a signal peptide directing secretion. Residues glycine 95, serine 97, arginine 102, alanine 147, and glutamate 191 each contribute to the D-alanine site.

It belongs to the bacterial solute-binding protein 3 family. In terms of assembly, monomer.

Its subcellular location is the periplasm. Functionally, part of the ABC transporter complex dalSTUV, that imports D-alanine into the cytoplasm. Helps protect the organism from oxidative killing by host neutrophils through sequestration of D-alanine, a substrate that is converted to hydrogen peroxide by the host enzyme DAO (D-amino acid oxidase). DalS shuttles D-alanine from the periplasm to the DalTUV complex situated in the inner membrane and through hydrolysis of ATP, D-alanine is transported across the membrane into the cytoplasm. Not required for the metabolism of D-alanine found in the stem peptide of peptidoglycan. The sequence is that of ABC transporter D-alanine-binding periplasmic protein from Salmonella typhimurium (strain LT2 / SGSC1412 / ATCC 700720).